We begin with the raw amino-acid sequence, 481 residues long: Ribosomal RNA small subunit methyltransferase F (481 aa).

S-adenosyl-L-methionine contacts are provided by residues 119-125, Glu143, Asp170, and Asp188; that span reads ASAPGSK. Residue Cys241 is the Nucleophile of the active site.

It belongs to the class I-like SAM-binding methyltransferase superfamily. RsmB/NOP family.

The protein resides in the cytoplasm. It catalyses the reaction cytidine(1407) in 16S rRNA + S-adenosyl-L-methionine = 5-methylcytidine(1407) in 16S rRNA + S-adenosyl-L-homocysteine + H(+). In terms of biological role, specifically methylates the cytosine at position 1407 (m5C1407) of 16S rRNA. This Shewanella sp. (strain MR-4) protein is Ribosomal RNA small subunit methyltransferase F.